A 248-amino-acid polypeptide reads, in one-letter code: Chromatin target of PRMT1 protein (248 aa).

Ala2 carries the N-acetylalanine modification. Residue Thr33 is modified to Phosphothreonine. Phosphoserine occurs at positions 40, 49, and 64. Residue Lys70 forms a Glycyl lysine isopeptide (Lys-Gly) (interchain with G-Cter in SUMO2) linkage. The disordered stretch occupies residues 151–204 (LRRGGVRGRGGPGRGGLGRGAMGRGGIGGRGRGMIGRGRGGFGGRGRGRGRGRG). An interaction with PRMT1 region spans residues 153 to 206 (RGGVRGRGGPGRGGLGRGAMGRGGIGGRGRGMIGRGRGGFGGRGRGRGRGRGAL). Gly residues predominate over residues 157-195 (RGRGGPGRGGLGRGAMGRGGIGGRGRGMIGRGRGGFGGR). Residues 194-203 (GRGRGRGRGR) carry the GAR motif; involved in 5hmC binding motif. At Thr242 the chain carries Phosphothreonine.

In terms of assembly, interacts with PRMT1 and PRMT5. Interacts with the 5FMC complex; the interaction is methylation-dependent. Interacts with FYTTD1, SET and PRC1 complex members CBX4, RNF2 and PHC2; the interactions are methylation-independent. Interacts with ZNF148. Component of the transcription/export (TREX) complex at least composed of ALYREF/THOC4, DDX39B, SARNP/CIP29, CHTOP and the THO subcomplex; TREX seems to have dynamic structure involving ATP-dependent remodeling; in the complex interacts (methylated) with ALYREF/THOC4 and with DDX39B in a methylation-independent manner. Interacts (methylated) with NXF1; the interaction is mutually exclusive with the NXF1:THOC5 interaction. Interacts with WDR77 and ERH. Asymmetrically methylated by PRMT1. Symmetrically methylated by PRMT5. Expressed in an erythroid progenitor cell line derived from peripheral blood. Expressed in glioblastoma cells.

Its subcellular location is the nucleus. It is found in the nucleolus. The protein resides in the nucleoplasm. The protein localises to the nucleus speckle. Plays an important role in the ligand-dependent activation of estrogen receptor target genes. May play a role in the silencing of fetal globin genes. Recruits the 5FMC complex to ZNF148, leading to desumoylation of ZNF148 and subsequent transactivation of ZNF148 target genes. Plays an important role in the tumorigenicity of glioblastoma cells. Binds to 5-hydroxymethylcytosine (5hmC) and associates with the methylosome complex containing PRMT1, PRMT5, MEP50 and ERH. The CHTOP-methylosome complex associated with 5hmC is recruited to selective sites on the chromosome, where it methylates H4R3 and activates the transcription of genes involved in glioblastomagenesis. Its function is as follows. Required for effective mRNA nuclear export and is a component of the TREX complex which is thought to couple mRNA transcription, processing and nuclear export, and specifically associates with spliced mRNA and not with unspliced pre-mRNA. TREX is recruited to spliced mRNAs by a transcription-independent mechanism, binds to mRNA upstream of the exon-junction complex (EJC) and is recruited in a splicing- and cap-dependent manner to a region near the 5' end of the mRNA where it functions in mRNA export to the cytoplasm via the TAP/NFX1 pathway. The TREX complex is essential for the export of Kaposi's sarcoma-associated herpesvirus (KSHV) intronless mRNAs and infectious virus production. Stimulates DDX39B ATPase and helicase activities. In cooperation with ALYREF/THOC4 enhances NXF1 RNA binding activity. The polypeptide is Chromatin target of PRMT1 protein (CHTOP) (Homo sapiens (Human)).